Here is a 105-residue protein sequence, read N- to C-terminus: Large ribosomal subunit protein uL24 (105 aa).

Belongs to the universal ribosomal protein uL24 family. Part of the 50S ribosomal subunit.

One of two assembly initiator proteins, it binds directly to the 5'-end of the 23S rRNA, where it nucleates assembly of the 50S subunit. Functionally, one of the proteins that surrounds the polypeptide exit tunnel on the outside of the subunit. This Hahella chejuensis (strain KCTC 2396) protein is Large ribosomal subunit protein uL24.